We begin with the raw amino-acid sequence, 360 residues long: Peptide chain release factor 1 (360 aa).

Residue Q236 is modified to N5-methylglutamine.

It belongs to the prokaryotic/mitochondrial release factor family. In terms of processing, methylated by PrmC. Methylation increases the termination efficiency of RF1.

It localises to the cytoplasm. Peptide chain release factor 1 directs the termination of translation in response to the peptide chain termination codons UAG and UAA. The protein is Peptide chain release factor 1 of Limosilactobacillus fermentum (strain NBRC 3956 / LMG 18251) (Lactobacillus fermentum).